We begin with the raw amino-acid sequence, 466 residues long: 20-hydroxyecdysone protein (466 aa).

Positions 1 to 16 (MKPVALILVFLAISQA) are cleaved as a signal peptide. The stretch at 48–50 (EVK) is one 1; approximate repeat. Residues 48–157 (EVKAEEVKPE…EIKKEATEIK (110 aa)) are 16 X repeats. The stretch at 53 to 55 (EVK) is one 2; approximate repeat. The disordered stretch occupies residues 55–94 (KPEEVKPIAQEEKAKDLKEEVKPEIKPEIKEQPKPDIKDE). One copy of the 3; approximate repeat lies at 58-60 (EVK). The stretch at 70–72 (DLK) is one 4; approximate repeat. One copy of the 5; approximate repeat lies at 74 to 76 (EVK). The stretch at 78–80 (EIK) is one 6; approximate repeat. One copy of the 7; approximate repeat lies at 82–84 (EIK). Residues 90–92 (DIK) form an 8; approximate repeat. A 9; approximate repeat occupies 94–96 (EIK). One copy of the 10; approximate repeat lies at 98–100 (DLK). The stretch at 102–104 (DIK) is one 11; approximate repeat. The stretch at 106-108 (ELK) is one 12; approximate repeat. The tract at residues 119–220 (PNAKPLELKE…QQSTTQGNFV (102 aa)) is disordered. The segment covering 124–160 (LELKEKSLEAEEKPQEIKEEVQQPEIKKEATEIKEEP) has biased composition (basic and acidic residues). Residues 125-127 (ELK) form a 13; approximate repeat. The stretch at 139 to 141 (EIK) is one 14; approximate repeat. The 15; approximate repeat unit spans residues 148-150 (EIK). One copy of the 16; approximate repeat lies at 155–157 (EIK). Over residues 170 to 180 (AEETVVVPAEE) the composition is skewed to low complexity. The span at 185–194 (PVEQEQSENQ) shows a compositional bias: polar residues. The segment covering 203–216 (QATQATPTQQSTTQ) has biased composition (low complexity). 2 N-linked (GlcNAc...) asparagine glycosylation sites follow: N294 and N352. Residues 378 to 435 (RPQNAPAAAPATQATEKPAVDDKIDPANDEVGEFVPESDNELRASGENIDDSFEDAGV) are disordered. Residues 379 to 394 (PQNAPAAAPATQATEK) show a composition bias toward low complexity. A compositionally biased stretch (acidic residues) spans 404-416 (ANDEVGEFVPESD).

It localises to the secreted. Its function is as follows. Probably has an essential role in embryogenesis, induces morphogenesis of imaginal disks, and may participate in multimolecular aggregates. The chain is 20-hydroxyecdysone protein (ImpE2) from Drosophila melanogaster (Fruit fly).